We begin with the raw amino-acid sequence, 351 residues long: Dihydroorotate dehydrogenase (quinone) (351 aa).

FMN is bound by residues 67 to 71 (AGFDK) and Thr-91. Lys-71 contacts substrate. 116 to 120 (NAMGF) is a substrate binding site. Residues Asn-145 and Asn-178 each coordinate FMN. Asn-178 contacts substrate. The active-site Nucleophile is the Ser-181. Residue Asn-183 coordinates substrate. FMN contacts are provided by Lys-214 and Thr-242. A substrate-binding site is contributed by 243–244 (NT). Residues Gly-262, Gly-291, and 312-313 (YS) contribute to the FMN site.

This sequence belongs to the dihydroorotate dehydrogenase family. Type 2 subfamily. In terms of assembly, monomer. It depends on FMN as a cofactor.

It localises to the cell membrane. The enzyme catalyses (S)-dihydroorotate + a quinone = orotate + a quinol. The protein operates within pyrimidine metabolism; UMP biosynthesis via de novo pathway; orotate from (S)-dihydroorotate (quinone route): step 1/1. Catalyzes the conversion of dihydroorotate to orotate with quinone as electron acceptor. The protein is Dihydroorotate dehydrogenase (quinone) (pyrD) of Helicobacter pylori (strain ATCC 700392 / 26695) (Campylobacter pylori).